The sequence spans 355 residues: Methylthioribose-1-phosphate isomerase (355 aa).

Substrate-binding positions include 47-49 (RGA), R90, and Q197. D238 (proton donor) is an active-site residue. 248-249 (NK) provides a ligand contact to substrate.

The protein belongs to the eIF-2B alpha/beta/delta subunits family. MtnA subfamily.

It carries out the reaction 5-(methylsulfanyl)-alpha-D-ribose 1-phosphate = 5-(methylsulfanyl)-D-ribulose 1-phosphate. The protein operates within amino-acid biosynthesis; L-methionine biosynthesis via salvage pathway; L-methionine from S-methyl-5-thio-alpha-D-ribose 1-phosphate: step 1/6. Its function is as follows. Catalyzes the interconversion of methylthioribose-1-phosphate (MTR-1-P) into methylthioribulose-1-phosphate (MTRu-1-P). This is Methylthioribose-1-phosphate isomerase from Herpetosiphon aurantiacus (strain ATCC 23779 / DSM 785 / 114-95).